Consider the following 273-residue polypeptide: Putative pyruvate, phosphate dikinase regulatory protein (273 aa).

Gly-153–Thr-160 is a binding site for ADP.

Belongs to the pyruvate, phosphate/water dikinase regulatory protein family. PDRP subfamily.

It catalyses the reaction N(tele)-phospho-L-histidyl/L-threonyl-[pyruvate, phosphate dikinase] + ADP = N(tele)-phospho-L-histidyl/O-phospho-L-threonyl-[pyruvate, phosphate dikinase] + AMP + H(+). The catalysed reaction is N(tele)-phospho-L-histidyl/O-phospho-L-threonyl-[pyruvate, phosphate dikinase] + phosphate + H(+) = N(tele)-phospho-L-histidyl/L-threonyl-[pyruvate, phosphate dikinase] + diphosphate. Its function is as follows. Bifunctional serine/threonine kinase and phosphorylase involved in the regulation of the pyruvate, phosphate dikinase (PPDK) by catalyzing its phosphorylation/dephosphorylation. The protein is Putative pyruvate, phosphate dikinase regulatory protein of Sinorhizobium medicae (strain WSM419) (Ensifer medicae).